Consider the following 160-residue polypeptide: Large ribosomal subunit protein uL11 (160 aa).

It belongs to the universal ribosomal protein uL11 family. In terms of assembly, part of the ribosomal stalk of the 50S ribosomal subunit. Interacts with L10 and the large rRNA to form the base of the stalk. L10 forms an elongated spine to which L12 dimers bind in a sequential fashion forming a multimeric L10(L12)X complex.

Its function is as follows. Forms part of the ribosomal stalk which helps the ribosome interact with GTP-bound translation factors. The sequence is that of Large ribosomal subunit protein uL11 from Nanoarchaeum equitans (strain Kin4-M).